A 687-amino-acid polypeptide reads, in one-letter code: Guanine-nucleotide exchange factor YEL1 (687 aa).

Polar residues predominate over residues 14–27 (YGVSQKGYNDNFSE). Disordered regions lie at residues 14–35 (YGVS…LHGS) and 63–97 (AAND…TDQN). Residues 57-264 (ILQNKEAAND…SEYYKTLNET (208 aa)) enclose the SEC7 domain. Positions 73 to 83 (TTDTATAGTGT) are enriched in low complexity. Thr-290 bears the Phosphothreonine mark. Residues Ser-293 and Ser-299 each carry the phosphoserine modification. In terms of domain architecture, PH spans 412–551 (ASRRTSLSYL…DCINFWAGRI (140 aa)).

This sequence belongs to the YEL1 family.

It localises to the cytoplasm. It is found in the cell membrane. The protein resides in the bud neck. The protein localises to the bud tip. Its function is as follows. Guanine nucleotide exchange factor for ARF3 required for localization of ARF3 to the bud neck and tip and involved in actin patch polarization. The polypeptide is Guanine-nucleotide exchange factor YEL1 (YEL1) (Saccharomyces cerevisiae (strain RM11-1a) (Baker's yeast)).